We begin with the raw amino-acid sequence, 430 residues long: CC-adding tRNA nucleotidyltransferase (430 aa).

33 to 36 (GCVR) contributes to the CTP binding site. 2 residues coordinate Mg(2+): Asp-46 and Asp-48. CTP-binding positions include 108-109 (RD), Asn-113, 150-159 (DPLRIVRAYR), and Arg-190.

Belongs to the tRNA nucleotidyltransferase/poly(A) polymerase family. The cofactor is Mg(2+).

The catalysed reaction is a tRNA precursor + 2 CTP = a tRNA with a 3' CC end + 2 diphosphate. Its function is as follows. tRNA nucleotidyltransferase involved in the synthesis of the tRNA CCA terminus. Adds the two cytidine residues to tRNA. The polypeptide is CC-adding tRNA nucleotidyltransferase (Geobacter sulfurreducens (strain ATCC 51573 / DSM 12127 / PCA)).